Here is a 150-residue protein sequence, read N- to C-terminus: PTTG1IP family member 2 (150 aa).

A signal peptide spans Met-1 to Ala-19. At Leu-20 to Asp-98 the chain is on the extracellular side. A glycan (N-linked (GlcNAc...) asparagine) is linked at Asn-26. Residues Leu-99–Cys-119 traverse the membrane as a helical segment. Residues Leu-120 to Trp-150 lie on the Cytoplasmic side of the membrane.

The protein localises to the membrane. The polypeptide is PTTG1IP family member 2 (Mus musculus (Mouse)).